A 222-amino-acid chain; its full sequence is Cytidylate kinase (222 aa).

7–15 (GPSASGKST) contacts ATP.

It belongs to the cytidylate kinase family. Type 1 subfamily.

The protein localises to the cytoplasm. It catalyses the reaction CMP + ATP = CDP + ADP. It carries out the reaction dCMP + ATP = dCDP + ADP. The protein is Cytidylate kinase of Aquifex aeolicus (strain VF5).